We begin with the raw amino-acid sequence, 820 residues long: DNA mismatch repair protein MutS (820 aa).

618–625 (GPNMAGKS) is a binding site for ATP.

It belongs to the DNA mismatch repair MutS family.

This protein is involved in the repair of mismatches in DNA. It is possible that it carries out the mismatch recognition step. This protein has a weak ATPase activity. The chain is DNA mismatch repair protein MutS from Chlamydia trachomatis serovar L2b (strain UCH-1/proctitis).